Reading from the N-terminus, the 127-residue chain is Fatty acid-binding protein, liver (127 aa).

The residue at position 1 (methionine 1) is an N-acetylmethionine. Residues lysine 31 and lysine 36 each carry the N6-succinyllysine modification. At serine 39 the chain carries Phosphoserine. Lysine 46 is subject to N6-succinyllysine. Serine 56 is subject to Phosphoserine. Lysine 57, lysine 78, and lysine 90 each carry N6-succinyllysine. A Phosphoserine modification is found at serine 100. Asparagine 105 is modified (deamidated asparagine; alternate). The segment at residues asparagine 105–glycine 106 is a cross-link (isoaspartyl glycine isopeptide (Asn-Gly); alternate). At lysine 121 the chain carries N6-succinyllysine.

It belongs to the calycin superfamily. Fatty-acid binding protein (FABP) family. Monomer. In terms of processing, deamidation and transpeptidation at the beta carboxyl of Asn-105 forms an isoaspartyl residue and Edman degradation appears as though blocked. This rearrangement gives rise to an extra negative charge carried by the acid form.

The protein resides in the cytoplasm. Plays a role in lipoprotein-mediated cholesterol uptake in hepatocytes. Binds cholesterol. Binds free fatty acids and their coenzyme A derivatives, bilirubin, and some other small molecules in the cytoplasm. May be involved in intracellular lipid transport. The polypeptide is Fatty acid-binding protein, liver (FABP1) (Bos taurus (Bovine)).